The primary structure comprises 270 residues: Putative pyruvate, phosphate dikinase regulatory protein (270 aa).

G150 to S157 contributes to the ADP binding site.

This sequence belongs to the pyruvate, phosphate/water dikinase regulatory protein family. PDRP subfamily.

The enzyme catalyses N(tele)-phospho-L-histidyl/L-threonyl-[pyruvate, phosphate dikinase] + ADP = N(tele)-phospho-L-histidyl/O-phospho-L-threonyl-[pyruvate, phosphate dikinase] + AMP + H(+). The catalysed reaction is N(tele)-phospho-L-histidyl/O-phospho-L-threonyl-[pyruvate, phosphate dikinase] + phosphate + H(+) = N(tele)-phospho-L-histidyl/L-threonyl-[pyruvate, phosphate dikinase] + diphosphate. In terms of biological role, bifunctional serine/threonine kinase and phosphorylase involved in the regulation of the pyruvate, phosphate dikinase (PPDK) by catalyzing its phosphorylation/dephosphorylation. This Neorickettsia sennetsu (strain ATCC VR-367 / Miyayama) (Ehrlichia sennetsu) protein is Putative pyruvate, phosphate dikinase regulatory protein.